A 1123-amino-acid chain; its full sequence is uncharacterized protein (1123 aa).

8 disordered regions span residues 136–229 (LGES…PKLT), 262–471 (MLQY…LNQH), 483–514 (LSSI…SPNL), 527–609 (KKIN…QSDD), 629–769 (SILC…NNIS), 782–812 (LKPK…NSSS), 835–1005 (ITNN…GESN), and 1070–1099 (NNNN…NNNI). Residues 166-185 (GGNGGNSGTNGDGDDGGCSL) are compositionally biased toward gly residues. Residues 190 to 199 (DENDYEDGMV) are compositionally biased toward acidic residues. Positions 211–223 (SGDGGGGGGGGGD) are enriched in gly residues. The segment covering 262–322 (MLQYQQQQQQ…TTTTHSNNSN (61 aa)) has biased composition (low complexity). Residues 329–343 (PLNNSNSNIHFLTNQ) are compositionally biased toward polar residues. Composition is skewed to low complexity over residues 344 to 387 (QNSD…SNLN), 397 to 464 (STST…SSSS), 489 to 499 (NNKENNNNNNN), 527 to 548 (KKIN…NISS), and 563 to 585 (HQQQ…QQHQ). Positions 590 to 604 (SKSSSELQVPSSNYH) are enriched in polar residues. The span at 632–646 (CKDDSKTNTNKDKDN) shows a compositional bias: basic and acidic residues. 2 stretches are compositionally biased toward low complexity: residues 647–707 (NNSN…INNN) and 727–769 (SVSS…NNIS). Residues 790–799 (SSPSIPTTSP) show a composition bias toward polar residues. Low complexity-rich tracts occupy residues 835 to 984 (ITNN…NNNI) and 1070 to 1098 (NNNN…NNNN).

This is an uncharacterized protein from Dictyostelium discoideum (Social amoeba).